We begin with the raw amino-acid sequence, 693 residues long: Polyribonucleotide nucleotidyltransferase (693 aa).

2 residues coordinate Mg(2+): aspartate 489 and aspartate 495. The KH domain maps to 556-615 (PQIHVMNINPAKIKDVVGRGGATVKGIVEKTGAQIDTSDSGEVKVFAKDKKSMDMAVAMI). Positions 625 to 693 (GQVYKGKIVK…GRVKLSLVAR (69 aa)) constitute an S1 motif domain.

It belongs to the polyribonucleotide nucleotidyltransferase family. In terms of assembly, component of the RNA degradosome, which is a multiprotein complex involved in RNA processing and mRNA degradation. It depends on Mg(2+) as a cofactor.

Its subcellular location is the cytoplasm. The catalysed reaction is RNA(n+1) + phosphate = RNA(n) + a ribonucleoside 5'-diphosphate. Involved in mRNA degradation. Catalyzes the phosphorolysis of single-stranded polyribonucleotides processively in the 3'- to 5'-direction. The protein is Polyribonucleotide nucleotidyltransferase of Francisella tularensis subsp. tularensis (strain FSC 198).